The chain runs to 133 residues: Nickel-responsive regulator (133 aa).

Residues H76, H87, H89, and C95 each contribute to the Ni(2+) site.

It belongs to the transcriptional regulatory CopG/NikR family. Homotetramer. Ni(2+) is required as a cofactor.

In terms of biological role, transcriptional repressor of the nikABCDE operon. Is active in the presence of excessive concentrations of intracellular nickel. This chain is Nickel-responsive regulator, found in Salmonella paratyphi A (strain ATCC 9150 / SARB42).